The primary structure comprises 400 residues: CCA-adding enzyme (400 aa).

G8 and R11 together coordinate ATP. Positions 8 and 11 each coordinate CTP. Mg(2+) contacts are provided by D21 and D23. ATP-binding residues include R91, R137, and R140. CTP-binding residues include R91, R137, and R140. The region spanning N217 to W322 is the HD domain.

The protein belongs to the tRNA nucleotidyltransferase/poly(A) polymerase family. Bacterial CCA-adding enzyme type 2 subfamily. Mg(2+) serves as cofactor.

It carries out the reaction a tRNA precursor + 2 CTP + ATP = a tRNA with a 3' CCA end + 3 diphosphate. The catalysed reaction is a tRNA with a 3' CCA end + 2 CTP + ATP = a tRNA with a 3' CCACCA end + 3 diphosphate. Catalyzes the addition and repair of the essential 3'-terminal CCA sequence in tRNAs without using a nucleic acid template. Adds these three nucleotides in the order of C, C, and A to the tRNA nucleotide-73, using CTP and ATP as substrates and producing inorganic pyrophosphate. tRNA 3'-terminal CCA addition is required both for tRNA processing and repair. Also involved in tRNA surveillance by mediating tandem CCA addition to generate a CCACCA at the 3' terminus of unstable tRNAs. While stable tRNAs receive only 3'-terminal CCA, unstable tRNAs are marked with CCACCA and rapidly degraded. In Actinobacillus succinogenes (strain ATCC 55618 / DSM 22257 / CCUG 43843 / 130Z), this protein is CCA-adding enzyme.